The primary structure comprises 333 residues: L-lactate dehydrogenase A chain (333 aa).

NAD(+) contacts are provided by residues 30-58 (GMVG…MEDK) and Arg-100. Arg-107, Asn-139, and Arg-170 together coordinate substrate. Residue Asn-139 participates in NAD(+) binding. The active-site Proton acceptor is the His-194. Thr-249 contributes to the substrate binding site.

Belongs to the LDH/MDH superfamily. LDH family. As to quaternary structure, homotetramer.

The protein localises to the cytoplasm. The catalysed reaction is (S)-lactate + NAD(+) = pyruvate + NADH + H(+). The protein operates within fermentation; pyruvate fermentation to lactate; (S)-lactate from pyruvate: step 1/1. In terms of biological role, interconverts simultaneously and stereospecifically pyruvate and lactate with concomitant interconversion of NADH and NAD(+). The polypeptide is L-lactate dehydrogenase A chain (ldha) (Danio rerio (Zebrafish)).